Reading from the N-terminus, the 288-residue chain is Elongation factor Ts (288 aa).

Positions 79 to 82 (TDFV) are involved in Mg(2+) ion dislocation from EF-Tu.

Belongs to the EF-Ts family.

It localises to the cytoplasm. Associates with the EF-Tu.GDP complex and induces the exchange of GDP to GTP. It remains bound to the aminoacyl-tRNA.EF-Tu.GTP complex up to the GTP hydrolysis stage on the ribosome. In Ehrlichia canis (strain Jake), this protein is Elongation factor Ts.